Reading from the N-terminus, the 217-residue chain is U2 snRNP component ist3 (217 aa).

Residues 31 to 109 (AYIYIGNLDF…RLVRVDHVAS (79 aa)) form the RRM domain. Disordered stretches follow at residues 119–138 (PANL…STIN) and 154–217 (EVEQ…DLDG). Residues 128-138 (SGSSLSVSTIN) are compositionally biased toward polar residues. Phosphoserine is present on Ser-160. 2 stretches are compositionally biased toward basic and acidic residues: residues 161-176 (PKDE…DYIH) and 185-198 (HESS…DSNR). The span at 199-217 (HSRHHRRHSRSRRHRDLDG) shows a compositional bias: basic residues.

It belongs to the IST3 family. In terms of assembly, belongs to the 40S cdc5-associated complex (or cwf complex), a spliceosome sub-complex reminiscent of a late-stage spliceosome composed of the U2, U5 and U6 snRNAs and at least brr2, cdc5, cwf2/prp3, cwf3/syf1, cwf4/syf3, cwf5/ecm2, spp42/cwf6, cwf7/spf27, cwf8, cwf9, cwf10, cwf11, cwf12, prp45/cwf13, cwf14, cwf15, cwf16, cwf17, cwf18, cwf19, cwf20, cwf21, cwf22, cwf23, cwf24, cwf25, cwf26, cyp7/cwf27, cwf28, cwf29/ist3, lea1, msl1, prp5/cwf1, prp10, prp12/sap130, prp17, prp22, sap61, sap62, sap114, sap145, slu7, smb1, smd1, smd3, smf1, smg1 and syf2.

The protein localises to the nucleus. Required for pre-mRNA splicing and spliceosome assembly. The sequence is that of U2 snRNP component ist3 (cwf29) from Schizosaccharomyces pombe (strain 972 / ATCC 24843) (Fission yeast).